The sequence spans 303 residues: Probable cell division protein WhiA (303 aa).

Residues 272 to 303 (SIQQVADALEFPITKSGVNHRLRKINKIADDL) constitute a DNA-binding region (H-T-H motif).

The protein belongs to the WhiA family.

In terms of biological role, involved in cell division and chromosome segregation. The sequence is that of Probable cell division protein WhiA from Streptococcus pyogenes serotype M1.